Here is a 197-residue protein sequence, read N- to C-terminus: Probable nicotinate-nucleotide adenylyltransferase (197 aa).

This sequence belongs to the NadD family.

The catalysed reaction is nicotinate beta-D-ribonucleotide + ATP + H(+) = deamido-NAD(+) + diphosphate. The protein operates within cofactor biosynthesis; NAD(+) biosynthesis; deamido-NAD(+) from nicotinate D-ribonucleotide: step 1/1. Its function is as follows. Catalyzes the reversible adenylation of nicotinate mononucleotide (NaMN) to nicotinic acid adenine dinucleotide (NaAD). The sequence is that of Probable nicotinate-nucleotide adenylyltransferase from Borrelia garinii subsp. bavariensis (strain ATCC BAA-2496 / DSM 23469 / PBi) (Borreliella bavariensis).